The chain runs to 347 residues: Elongation factor Ts (347 aa).

An involved in Mg(2+) ion dislocation from EF-Tu region spans residues 80 to 83 (TDFV).

The protein belongs to the EF-Ts family.

It localises to the cytoplasm. Its function is as follows. Associates with the EF-Tu.GDP complex and induces the exchange of GDP to GTP. It remains bound to the aminoacyl-tRNA.EF-Tu.GTP complex up to the GTP hydrolysis stage on the ribosome. This chain is Elongation factor Ts, found in Streptococcus sanguinis (strain SK36).